A 130-amino-acid chain; its full sequence is NADH-quinone oxidoreductase subunit A (130 aa).

The next 3 membrane-spanning stretches (helical) occupy residues 15–35 (AIHV…ATII), 67–87 (FLIA…FAWA), and 95–115 (WVGL…LIYL).

It belongs to the complex I subunit 3 family. As to quaternary structure, NDH-1 is composed of 14 different subunits. Subunits NuoA, H, J, K, L, M, N constitute the membrane sector of the complex.

The protein resides in the cell inner membrane. The enzyme catalyses a quinone + NADH + 5 H(+)(in) = a quinol + NAD(+) + 4 H(+)(out). Its function is as follows. NDH-1 shuttles electrons from NADH, via FMN and iron-sulfur (Fe-S) centers, to quinones in the respiratory chain. The immediate electron acceptor for the enzyme in this species is believed to be ubiquinone. Couples the redox reaction to proton translocation (for every two electrons transferred, four hydrogen ions are translocated across the cytoplasmic membrane), and thus conserves the redox energy in a proton gradient. This Rhodopseudomonas palustris (strain BisA53) protein is NADH-quinone oxidoreductase subunit A.